A 431-amino-acid chain; its full sequence is Tol-Pal system protein TolB (431 aa).

An N-terminal signal peptide occupies residues methionine 1 to alanine 26. The tract at residues aspartate 406–glutamine 431 is disordered.

This sequence belongs to the TolB family. The Tol-Pal system is composed of five core proteins: the inner membrane proteins TolA, TolQ and TolR, the periplasmic protein TolB and the outer membrane protein Pal. They form a network linking the inner and outer membranes and the peptidoglycan layer.

It localises to the periplasm. Part of the Tol-Pal system, which plays a role in outer membrane invagination during cell division and is important for maintaining outer membrane integrity. The polypeptide is Tol-Pal system protein TolB (Burkholderia orbicola (strain AU 1054)).